A 155-amino-acid chain; its full sequence is SsrA-binding protein (155 aa).

Positions 136 to 155 (REDLKRRQDQRDIQRAMKSY) are disordered.

Belongs to the SmpB family.

It localises to the cytoplasm. In terms of biological role, required for rescue of stalled ribosomes mediated by trans-translation. Binds to transfer-messenger RNA (tmRNA), required for stable association of tmRNA with ribosomes. tmRNA and SmpB together mimic tRNA shape, replacing the anticodon stem-loop with SmpB. tmRNA is encoded by the ssrA gene; the 2 termini fold to resemble tRNA(Ala) and it encodes a 'tag peptide', a short internal open reading frame. During trans-translation Ala-aminoacylated tmRNA acts like a tRNA, entering the A-site of stalled ribosomes, displacing the stalled mRNA. The ribosome then switches to translate the ORF on the tmRNA; the nascent peptide is terminated with the 'tag peptide' encoded by the tmRNA and targeted for degradation. The ribosome is freed to recommence translation, which seems to be the essential function of trans-translation. The protein is SsrA-binding protein of Nostoc punctiforme (strain ATCC 29133 / PCC 73102).